Here is a 416-residue protein sequence, read N- to C-terminus: Protein-glutamine gamma-glutamyltransferase (416 aa).

A signal peptide (tat-type signal) is located at residues 1 to 29 (MHKRRRLLAFATVGAVICTAGFTPSVSQA). A propeptide spanning residues 30-85 (ASSGDGEEKGSYAETHGLTADDVESINALNERALTLGQPGKPPKELPPSASAPSRA) is cleaved from the precursor. Residues 64-103 (TLGQPGKPPKELPPSASAPSRAPSDDRETPPAEPLDRMPE) form a disordered region. Positions 76 to 85 (PPSASAPSRA) are enriched in low complexity. Over residues 86-103 (PSDDRETPPAEPLDRMPE) the composition is skewed to basic and acidic residues. The active site involves Cys-149. The disordered stretch occupies residues 290–331 (GQDQRGSSDKRKYGDPEAFRPDQGTGLVDMSKDRSIPRSPAK). Positions 295–309 (GSSDKRKYGDPEAFR) are enriched in basic and acidic residues. Residues Asp-340 and His-359 contribute to the active site.

It belongs to the bacterial TGase family. Post-translationally, predicted to be exported by the Tat system. The position of the signal peptide cleavage has not been experimentally proven.

It carries out the reaction L-glutaminyl-[protein] + L-lysyl-[protein] = [protein]-L-lysyl-N(6)-5-L-glutamyl-[protein] + NH4(+). Catalyzes the cross-linking of proteins and the conjugation of polyamines to proteins. This Streptomyces cinnamoneus (Streptoverticillium cinnamoneum) protein is Protein-glutamine gamma-glutamyltransferase.